The sequence spans 952 residues: Valine--tRNA ligase (952 aa).

Residues 42–52 carry the 'HIGH' region motif; sequence PNVTGSLHMGH. A 'KMSKS' region motif is present at residues 554 to 558; that stretch reads KMSKS. An ATP-binding site is contributed by Lys-557. A coiled-coil region spans residues 888–952; it reads AELARLDGEI…EEQKKTIAAL (65 aa).

The protein belongs to the class-I aminoacyl-tRNA synthetase family. ValS type 1 subfamily. Monomer.

It is found in the cytoplasm. It carries out the reaction tRNA(Val) + L-valine + ATP = L-valyl-tRNA(Val) + AMP + diphosphate. Its function is as follows. Catalyzes the attachment of valine to tRNA(Val). As ValRS can inadvertently accommodate and process structurally similar amino acids such as threonine, to avoid such errors, it has a 'posttransfer' editing activity that hydrolyzes mischarged Thr-tRNA(Val) in a tRNA-dependent manner. This Vibrio parahaemolyticus serotype O3:K6 (strain RIMD 2210633) protein is Valine--tRNA ligase.